Consider the following 542-residue polypeptide: Apolipoprotein N-acyltransferase (542 aa).

The next 6 membrane-spanning stretches (helical) occupy residues 26-46 (ASVI…LSLV), 54-74 (IWCL…SWML), 89-109 (LLIS…VLCF), 113-133 (YWGA…VRYY), 163-183 (WAGQ…VLVF), and 187-207 (FSYG…GTYY). One can recognise a CN hydrolase domain in the interval 220-499 (LRVAIVQPGY…PDVLQVSVPV (280 aa)). The active-site Proton acceptor is E264. K349 is a catalytic residue. The Nucleophile role is filled by C404. Residues 509-529 (FGDAPLLFVAVSSVLGVVGYF) form a helical membrane-spanning segment.

Belongs to the CN hydrolase family. Apolipoprotein N-acyltransferase subfamily.

It localises to the cell inner membrane. It carries out the reaction N-terminal S-1,2-diacyl-sn-glyceryl-L-cysteinyl-[lipoprotein] + a glycerophospholipid = N-acyl-S-1,2-diacyl-sn-glyceryl-L-cysteinyl-[lipoprotein] + a 2-acyl-sn-glycero-3-phospholipid + H(+). Its pathway is protein modification; lipoprotein biosynthesis (N-acyl transfer). Functionally, catalyzes the phospholipid dependent N-acylation of the N-terminal cysteine of apolipoprotein, the last step in lipoprotein maturation. The chain is Apolipoprotein N-acyltransferase from Chlamydia muridarum (strain MoPn / Nigg).